Reading from the N-terminus, the 63-residue chain is Beta-defensin 6 (63 aa).

An N-terminal signal peptide occupies residues 1–22 (MKIHYLLFAFILVMLSPLAAFS). Glutamine 23 is subject to Pyrrolidone carboxylic acid. Cystine bridges form between cysteine 31–cysteine 59, cysteine 38–cysteine 52, and cysteine 42–cysteine 60.

Belongs to the beta-defensin family. In terms of tissue distribution, predominantly expressed in skeletal muscle, also expressed in esophagus, tongue, and trachea. Also expressed in lung when induced by lipopolysaccharide.

It is found in the secreted. Has potent antibacterial activity against E.coli (ATCC 25922). This is Beta-defensin 6 (Defb6) from Mus musculus (Mouse).